A 146-amino-acid chain; its full sequence is Large ribosomal subunit protein uL13 (146 aa).

The protein belongs to the universal ribosomal protein uL13 family. As to quaternary structure, part of the 50S ribosomal subunit.

Functionally, this protein is one of the early assembly proteins of the 50S ribosomal subunit, although it is not seen to bind rRNA by itself. It is important during the early stages of 50S assembly. In Methylobacillus flagellatus (strain ATCC 51484 / DSM 6875 / VKM B-1610 / KT), this protein is Large ribosomal subunit protein uL13.